The sequence spans 636 residues: Polyadenylate-binding protein 1 (636 aa).

The residue at position 1 (methionine 1) is an N-acetylmethionine. RRM domains follow at residues alanine 11 to arginine 89, glycine 99 to serine 175, threonine 191 to lysine 268, and valine 294 to arginine 370. The segment at arginine 166 to threonine 289 is UNR-binding. Residue lysine 299 is modified to N6-methyllysine. A Phosphoserine modification is found at serine 315. Threonine 319 carries the phosphothreonine modification. Residues arginine 385, arginine 419, arginine 432, and arginine 436 each carry the omega-N-methylarginine modification. An omega-N-methylated arginine; by CARM1 mark is found at arginine 455 and arginine 460. 2 positions are modified to omega-N-methylarginine: arginine 475 and arginine 481. Arginine 493 carries the post-translational modification Asymmetric dimethylarginine; alternate. The residue at position 493 (arginine 493) is a Dimethylated arginine; alternate. Residue arginine 493 is modified to Omega-N-methylarginine; alternate. Residue arginine 506 is modified to Omega-N-methylarginine. Lysine 512 carries the post-translational modification N6-acetyllysine. The residue at position 518 (arginine 518) is an Omega-N-methylarginine. Residues glutamine 542–alanine 619 enclose the PABC domain.

The protein belongs to the polyadenylate-binding protein type-1 family. In terms of assembly, may form homodimers. Component of a multisubunit autoregulatory ribonucleoprotein complex (ARC), at least composed of IGF2BP1, PABPC1 and CSDE1. Directly interacts with IGF2BP1. Part of a complex associated with the FOS mCRD domain and consisting of HNRPD, SYNCRIP, PAIP1 and CSDE1/UNR. Interacts with PAIP1 and PAIP2 (via the PABPC1-interacting motifs PAM1 and PAM2). Interacts with PAIP1 with a 1:1 stoichiometry and with PAIP2 with a 1:2 stoichiometry. The interaction with CSDE1 is direct and RNA-independent. Found in a mRNP complex with YBX2. Interacts with TENT2/GLD2. Identified in the spliceosome C complex. Identified in a mRNP complex, at least composed of DHX9, DDX3X, ELAVL1, HNRNPU, IGF2BP1, ILF3, PABPC1, PCBP2, PTBP2, STAU1, STAU2, SYNCRIP and YBX1. The interaction with DDX3X is direct and RNA-independent. This interaction increases in stressed cells and decreases during cell recovery. Identified in a IGF2BP1-dependent mRNP granule complex containing untranslated mRNAs. Interacts with NXF1/TAP. Interacts with PIWIL1. Interacts with AGO1, AGO2, GSPT1 and GSPT2. Interacts with LARP4B. Interacts (via the second and third RRM domains and the C-terminus) with PAIP2B (via central acidic portion and C-terminus). Forms a complex with LARP1 and SHFL. Interacts with LARP4. Interacts with ZFC3H1 in a RNase-sensitive manner. Interacts with TRIM71 (via NHL repeats) in an RNA-dependent manner. Interacts with TENT5C; the interaction has no effect on TENT5C poly(A) polymerase function. Interacts with G3BP1 and G3BP2. Interacts with ENDOV; the interaction is RNA-dependent and stimulates ENDOV activity. Interacts with UPF1; the interaction is RNA-dependent. Interacts with IGF2BP2 and IGF2BP3. May interact with SETX. Interacts with RBM46. Interacts with PAN3 isoform 1/Pan3L and isoform 3/Pan3S (via N-terminus); interaction with isoform 1 is less efficient than with isoform 3. Post-translationally, phosphorylated by MAPKAPK2. Methylated by CARM1. Arg-493 is dimethylated, probably to asymmetric dimethylarginine.

The protein resides in the cytoplasm. The protein localises to the stress granule. It localises to the nucleus. Its subcellular location is the cell projection. It is found in the lamellipodium. In terms of biological role, binds the poly(A) tail of mRNA, including that of its own transcript, and regulates processes of mRNA metabolism such as pre-mRNA splicing and mRNA stability. Its function in translational initiation regulation can either be enhanced by PAIP1 or repressed by PAIP2. Can probably bind to cytoplasmic RNA sequences other than poly(A) in vivo. Binds to N6-methyladenosine (m6A)-containing mRNAs and contributes to MYC stability by binding to m6A-containing MYC mRNAs. Involved in translationally coupled mRNA turnover. Implicated with other RNA-binding proteins in the cytoplasmic deadenylation/translational and decay interplay of the FOS mRNA mediated by the major coding-region determinant of instability (mCRD) domain. Involved in regulation of nonsense-mediated decay (NMD) of mRNAs containing premature stop codons; for the recognition of premature termination codons (PTC) and initiation of NMD a competitive interaction between UPF1 and PABPC1 with the ribosome-bound release factors is proposed. By binding to long poly(A) tails, may protect them from uridylation by ZCCHC6/ZCCHC11 and hence contribute to mRNA stability. This Rattus norvegicus (Rat) protein is Polyadenylate-binding protein 1 (Pabpc1).